A 186-amino-acid chain; its full sequence is Ribosome-recycling factor (186 aa).

The protein belongs to the RRF family.

The protein localises to the cytoplasm. Responsible for the release of ribosomes from messenger RNA at the termination of protein biosynthesis. May increase the efficiency of translation by recycling ribosomes from one round of translation to another. This Methylibium petroleiphilum (strain ATCC BAA-1232 / LMG 22953 / PM1) protein is Ribosome-recycling factor.